The sequence spans 381 residues: MLEILWANITPIQTFVSSNHLTMLYGLKRFGCRLYHHSKSTRYIDATAKVVSQEPAAISSTGAIPLNSPAAPLLSQDVLIVERQLEMMNVFLGYEQANRYVILNQQGQHLGYIAEQGASSILSSLSRQFFHTHRAFKADVMDSNGQLVLQLNRPFSWINSRLQIHSIDYSKFSSTLVGEVLQKWHLWRRRYELFLAKRSMFEQFAKIDERVLSWEFLLRNEQDRILGSVSRNFMGLPREFFTDTGNYVLRFTSTSAANGSVNENQLLQAAHGIANDVCARDMSLEERAVMLGSAVTIDFDYFSRIHGGPALGLNIPFMFGGSSSNHDYPAEDLSAQEILKNDQETTPSTNDSSSETKSPFLSDADLDQQDFWDIFDRDGDD.

A disordered region spans residues 336–369; the sequence is QEILKNDQETTPSTNDSSSETKSPFLSDADLDQQ. Positions 344–359 are enriched in polar residues; the sequence is ETTPSTNDSSSETKSP.

This sequence belongs to the phospholipid scramblase family.

The protein localises to the mitochondrion. This Schizosaccharomyces pombe (strain 972 / ATCC 24843) (Fission yeast) protein is Phospholipid scramblase family protein C343.06c.